The primary structure comprises 283 residues: Pantothenate synthetase (283 aa).

30–37 (MGNLHLGH) serves as a coordination point for ATP. The Proton donor role is filled by His-37. Gln-61 lines the (R)-pantoate pocket. Position 61 (Gln-61) interacts with beta-alanine. 149-152 (GQKD) provides a ligand contact to ATP. Gln-155 is a (R)-pantoate binding site. Residues Ile-178 and 186-189 (MSSR) each bind ATP.

The protein belongs to the pantothenate synthetase family. As to quaternary structure, homodimer.

It is found in the cytoplasm. It carries out the reaction (R)-pantoate + beta-alanine + ATP = (R)-pantothenate + AMP + diphosphate + H(+). The protein operates within cofactor biosynthesis; (R)-pantothenate biosynthesis; (R)-pantothenate from (R)-pantoate and beta-alanine: step 1/1. Catalyzes the condensation of pantoate with beta-alanine in an ATP-dependent reaction via a pantoyl-adenylate intermediate. The sequence is that of Pantothenate synthetase from Shewanella halifaxensis (strain HAW-EB4).